The sequence spans 174 residues: Transcriptional repressor NrdR (174 aa).

Residues 3–34 (CPFCQHSDTRVIDSRVSEDGTTIRRRRECEAC) fold into a zinc finger. An ATP-cone domain is found at 49-139 (PTVVKSDGGR…VYRSFQDVAD (91 aa)).

This sequence belongs to the NrdR family. Zn(2+) is required as a cofactor.

Its function is as follows. Negatively regulates transcription of bacterial ribonucleotide reductase nrd genes and operons by binding to NrdR-boxes. The sequence is that of Transcriptional repressor NrdR from Xanthomonas oryzae pv. oryzae (strain MAFF 311018).